Consider the following 91-residue polypeptide: Small ribosomal subunit protein uS19 (91 aa).

It belongs to the universal ribosomal protein uS19 family.

Protein S19 forms a complex with S13 that binds strongly to the 16S ribosomal RNA. This Cupriavidus pinatubonensis (strain JMP 134 / LMG 1197) (Cupriavidus necator (strain JMP 134)) protein is Small ribosomal subunit protein uS19.